Reading from the N-terminus, the 390-residue chain is Pyruvate dehydrogenase E1 component subunit alpha, somatic form, mitochondrial (390 aa).

Residues 1–29 (MRKMLAAVSRVLSGASQKPASRVLVASRN) constitute a mitochondrion transit peptide. An N6-acetyllysine; alternate modification is found at lysine 63. An N6-succinyllysine; alternate modification is found at lysine 63. Pyruvate-binding residues include histidine 92, tyrosine 118, arginine 119, alanine 157, glycine 165, valine 167, aspartate 196, glycine 197, alanine 198, asparagine 225, and tyrosine 227. Thiamine diphosphate-binding residues include tyrosine 118 and arginine 119. Thiamine diphosphate is bound by residues glycine 165, valine 167, aspartate 196, glycine 197, alanine 198, and asparagine 225. Aspartate 196 is a Mg(2+) binding site. Mg(2+) is bound by residues asparagine 225 and tyrosine 227. Serine 232 carries the post-translational modification Phosphoserine; by PDK1. Lysine 244 carries the N6-acetyllysine; alternate modification. Lysine 244 bears the N6-succinyllysine; alternate mark. Lysine 277 carries the N6-succinyllysine modification. Histidine 292 contacts thiamine diphosphate. At serine 293 the chain carries Phosphoserine; by PDK1, PDK2, PDK3 and PDK4. Residue serine 295 is modified to Phosphoserine. Serine 300 is modified (phosphoserine; by PDK1, PDK2, PDK3 and PDK4). Tyrosine 301 carries the post-translational modification Phosphotyrosine. At lysine 313 the chain carries N6-acetyllysine; alternate. At lysine 313 the chain carries N6-succinyllysine; alternate. N6-acetyllysine occurs at positions 321 and 336. Lysine 385 carries the N6-succinyllysine modification.

Heterotetramer of two PDHA1 and two PDHB subunits. The heterotetramer interacts with DLAT, and is part of the multimeric pyruvate dehydrogenase complex that contains multiple copies of pyruvate dehydrogenase (E1), dihydrolipoamide acetyltransferase (DLAT, E2) and lipoamide dehydrogenase (DLD, E3). These subunits are bound to an inner core composed of about 48 DLAT and 12 PDHX molecules. The cofactor is thiamine diphosphate. Mg(2+) is required as a cofactor. Phosphorylation at Ser-232, Ser-293 and Ser-300 by PDK family kinases inactivates the enzyme; for this phosphorylation at a single site is sufficient. Dephosphorylation at all three sites, i.e. at Ser-232, Ser-293 and Ser-300, is required for reactivation. Post-translationally, acetylation alters the phosphorylation pattern. Deacetylated by SIRT3. As to expression, ubiquitous.

The protein localises to the mitochondrion matrix. The enzyme catalyses N(6)-[(R)-lipoyl]-L-lysyl-[protein] + pyruvate + H(+) = N(6)-[(R)-S(8)-acetyldihydrolipoyl]-L-lysyl-[protein] + CO2. Pyruvate dehydrogenase activity is inhibited by phosphorylation of PDHA1; it is reactivated by dephosphorylation. Its function is as follows. The pyruvate dehydrogenase complex catalyzes the overall conversion of pyruvate to acetyl-CoA and CO(2), and thereby links the glycolytic pathway to the tricarboxylic cycle. The chain is Pyruvate dehydrogenase E1 component subunit alpha, somatic form, mitochondrial (PDHA1) from Homo sapiens (Human).